The following is a 222-amino-acid chain: Putative N-acetylmannosamine-6-phosphate 2-epimerase (222 aa).

It belongs to the NanE family.

It catalyses the reaction an N-acyl-D-glucosamine 6-phosphate = an N-acyl-D-mannosamine 6-phosphate. It participates in amino-sugar metabolism; N-acetylneuraminate degradation; D-fructose 6-phosphate from N-acetylneuraminate: step 3/5. Functionally, converts N-acetylmannosamine-6-phosphate (ManNAc-6-P) to N-acetylglucosamine-6-phosphate (GlcNAc-6-P). The protein is Putative N-acetylmannosamine-6-phosphate 2-epimerase of Staphylococcus aureus (strain Mu3 / ATCC 700698).